The chain runs to 241 residues: uncharacterized protein (241 aa).

This is an uncharacterized protein from Methanocaldococcus jannaschii (strain ATCC 43067 / DSM 2661 / JAL-1 / JCM 10045 / NBRC 100440) (Methanococcus jannaschii).